The chain runs to 332 residues: Putative pumilio homolog 20 (332 aa).

The PUM-HD domain occupies 1–332; sequence MAHQLRFAAA…NIASILNSIR (332 aa). 2 Pumilio repeats span residues 89–124 and 125–159; these read SDPD…FAAA and ILRR…AMYE. One copy of the Pumilio 3; degenerate repeat lies at 160 to 191; sequence HILHYASHIARDKHGNLALNDIITDAYRNKLF. Pumilio repeat units lie at residues 192–228, 229–266, and 267–303; these read DVIA…NIVV, SLRG…ELME, and CEGD…DLFW.

The protein resides in the cytoplasm. Functionally, sequence-specific RNA-binding protein that regulates translation and mRNA stability by binding the 3'-UTR of target mRNAs. The polypeptide is Putative pumilio homolog 20 (APUM20) (Arabidopsis thaliana (Mouse-ear cress)).